Reading from the N-terminus, the 468-residue chain is 3-isopropylmalate dehydratase large subunit (468 aa).

[4Fe-4S] cluster contacts are provided by cysteine 345, cysteine 405, and cysteine 408.

The protein belongs to the aconitase/IPM isomerase family. LeuC type 1 subfamily. In terms of assembly, heterodimer of LeuC and LeuD. It depends on [4Fe-4S] cluster as a cofactor.

It catalyses the reaction (2R,3S)-3-isopropylmalate = (2S)-2-isopropylmalate. It participates in amino-acid biosynthesis; L-leucine biosynthesis; L-leucine from 3-methyl-2-oxobutanoate: step 2/4. Functionally, catalyzes the isomerization between 2-isopropylmalate and 3-isopropylmalate, via the formation of 2-isopropylmaleate. The chain is 3-isopropylmalate dehydratase large subunit from Oceanobacillus iheyensis (strain DSM 14371 / CIP 107618 / JCM 11309 / KCTC 3954 / HTE831).